We begin with the raw amino-acid sequence, 631 residues long: Glutamyl-tRNA(Gln) amidotransferase subunit E (631 aa).

The protein belongs to the GatB/GatE family. GatE subfamily. As to quaternary structure, heterodimer of GatD and GatE.

The enzyme catalyses L-glutamyl-tRNA(Gln) + L-glutamine + ATP + H2O = L-glutaminyl-tRNA(Gln) + L-glutamate + ADP + phosphate + H(+). Its function is as follows. Allows the formation of correctly charged Gln-tRNA(Gln) through the transamidation of misacylated Glu-tRNA(Gln) in organisms which lack glutaminyl-tRNA synthetase. The reaction takes place in the presence of glutamine and ATP through an activated gamma-phospho-Glu-tRNA(Gln). The GatDE system is specific for glutamate and does not act on aspartate. This chain is Glutamyl-tRNA(Gln) amidotransferase subunit E, found in Methanococcus maripaludis (strain C5 / ATCC BAA-1333).